Reading from the N-terminus, the 412-residue chain is Light-independent protochlorophyllide reductase subunit N (412 aa).

[4Fe-4S] cluster contacts are provided by cysteine 16, cysteine 41, and cysteine 102.

The protein belongs to the BchN/ChlN family. As to quaternary structure, protochlorophyllide reductase is composed of three subunits; ChlL, ChlN and ChlB. Forms a heterotetramer of two ChlB and two ChlN subunits. Requires [4Fe-4S] cluster as cofactor.

The enzyme catalyses chlorophyllide a + oxidized 2[4Fe-4S]-[ferredoxin] + 2 ADP + 2 phosphate = protochlorophyllide a + reduced 2[4Fe-4S]-[ferredoxin] + 2 ATP + 2 H2O. It participates in porphyrin-containing compound metabolism; chlorophyll biosynthesis (light-independent). Its function is as follows. Component of the dark-operative protochlorophyllide reductase (DPOR) that uses Mg-ATP and reduced ferredoxin to reduce ring D of protochlorophyllide (Pchlide) to form chlorophyllide a (Chlide). This reaction is light-independent. The NB-protein (ChlN-ChlB) is the catalytic component of the complex. This Synechococcus sp. (strain RCC307) protein is Light-independent protochlorophyllide reductase subunit N.